The sequence spans 373 residues: MTAESGPPPPQPEVLATVKEERGETAAGAGVPGEATGRGAGGRRRKRPLQRGKPPYSYIALIAMAIAHAPERRLTLGGIYKFITERFPFYRDNPKKWQNSIRHNLTLNDCFLKIPREAGRPGKGNYWALDPNAEDMFESGSFLRRRKRFKRSDLSTYPAYMHDAAAAAAAAAAAAAAAAIFPGAVPAARPPYPGAVYAGYAPPSLAAPPPVYYPAASPGPCRVFGLVPERPLSPELGPAPSGPGGSCAFASAGAPATTTGYQPAGCTGARPANPSAYAAAYAGPDGAYPQGAGSAIFAAAGRLAGPASPPAGGSSGGVETTVDFYGRTSPGQFGALGACYNPGGQLGGASAGAYHARHAAAYPGGIDRFVSAM.

The tract at residues Lys19–Arg51 is disordered. Residues Gly41 to Gln50 are compositionally biased toward basic residues. The segment at residues Lys53 to Lys147 is a DNA-binding region (fork-head).

Post-translationally, phosphorylated. Detected in adult brain, placenta, lung, liver, skeletal muscle, kidney, pancreas, heart, colon, small intestine testis and thymus. Expression was strongest in heart and pancreas.

The protein localises to the nucleus. Transcription factor that binds consensus sites on a variety of gene promoters and activate their transcription. Involved in proper palate formation, most probably through the expression of MSX1 and TGFB3 genes which are direct targets of this transcription factor. Also implicated in thyroid gland morphogenesis. May indirectly play a role in cell growth and migration through the regulation of WNT5A expression. This is Forkhead box protein E1 (FOXE1) from Homo sapiens (Human).